We begin with the raw amino-acid sequence, 127 residues long: Thioredoxin domain-containing protein 8 (127 aa).

Residues 1 to 92 (MVQIIKDTNE…SQKVTLFSRI (92 aa)) enclose the Thioredoxin domain. A disulfide bridge links C32 with C35.

This sequence belongs to the thioredoxin family. Testis-specific. Only expressed during spermiogenesis, prominently in the Golgi apparatus of pachytene spermatocytes and round and elongated spermatids, with a transient localization in the developing acrosome of round spermatids (at protein level).

The protein resides in the cytoplasm. The protein localises to the golgi apparatus. In terms of biological role, may be required for post-translational modifications of proteins required for acrosomal biogenesis. May act by reducing disulfide bonds within the sperm. In Homo sapiens (Human), this protein is Thioredoxin domain-containing protein 8 (TXNDC8).